A 366-amino-acid polypeptide reads, in one-letter code: 15-cis-zeta-carotene isomerase, chloroplastic (366 aa).

The N-terminal 45 residues, 1 to 45, are a transit peptide targeting the chloroplast; the sequence is MASQLRLHLAATPPLLPHRRPHLARPLCPTLNPIRAPLPPLSRVL. 6 helical membrane-spanning segments follow: residues 94–114, 136–156, 171–191, 203–223, 260–280, and 338–358; these read SWAY…VLWI, EVVM…MASL, VLFA…FINH, GITG…FFLY, VIWC…AASV, and LPYV…PLMQ.

Expressed in leaves and roots, and at lower levels in embryos and endosperm.

It is found in the plastid. The protein localises to the chloroplast membrane. The enzyme catalyses 9,9',15-tri-cis-zeta-carotene = 9,9'-di-cis-zeta-carotene. Functionally, isomerase involved in the biosynthesis of carotenoids. Catalyzes the cis- to trans-conversion of the 15-cis-bond in 9,15,9'-tri-cis-zeta-carotene. This Zea mays (Maize) protein is 15-cis-zeta-carotene isomerase, chloroplastic.